We begin with the raw amino-acid sequence, 250 residues long: Uracil-DNA glycosylase (250 aa).

Catalysis depends on D78, which acts as the Proton acceptor. Residues 228 to 250 form a disordered region; sequence RGQKPVDWSGEQNNASRQGEFAL.

The protein belongs to the uracil-DNA glycosylase (UDG) superfamily. UNG family.

The protein localises to the cytoplasm. It catalyses the reaction Hydrolyzes single-stranded DNA or mismatched double-stranded DNA and polynucleotides, releasing free uracil.. Its function is as follows. Excises uracil residues from the DNA which can arise as a result of misincorporation of dUMP residues by DNA polymerase or due to deamination of cytosine. This chain is Uracil-DNA glycosylase, found in Bordetella parapertussis (strain 12822 / ATCC BAA-587 / NCTC 13253).